A 163-amino-acid chain; its full sequence is Protein-export protein SecB (163 aa).

It belongs to the SecB family. In terms of assembly, homotetramer, a dimer of dimers. One homotetramer interacts with 1 SecA dimer.

It localises to the cytoplasm. One of the proteins required for the normal export of preproteins out of the cell cytoplasm. It is a molecular chaperone that binds to a subset of precursor proteins, maintaining them in a translocation-competent state. It also specifically binds to its receptor SecA. This chain is Protein-export protein SecB, found in Burkholderia ambifaria (strain MC40-6).